The primary structure comprises 1219 residues: N-acetylglucosamine-1-phosphotransferase subunits alpha/beta (1219 aa).

Residues 27–47 form a helical membrane-spanning segment; sequence LCFGGLVLMIVSAFQFGEVVV. 5 N-linked (GlcNAc...) asparagine glycosylation sites follow: Asn-88, Asn-119, Asn-153, Asn-292, and Asn-381. Cystine bridges form between Cys-443–Cys-466, Cys-457–Cys-473, Cys-508–Cys-531, and Cys-522–Cys-538. LNR repeat units lie at residues 443–478 and 508–538; these read CAEG…GSSR and CNQG…VGDC. Asp-454 lines the Ca(2+) pocket. The N-linked (GlcNAc...) asparagine glycan is linked to Asn-462. Ca(2+) is bound by residues Asp-469, Asp-472, Asp-519, Asp-534, and Asp-537. N-linked (GlcNAc...) asparagine glycans are attached at residues Asn-554, Asn-610, Asn-617, Asn-645, Asn-696, Asn-726, Asn-823, and Asn-974. The segment at 640 to 666 is disordered; it reads ELPKSNTSTPVRDKEEEPKPTVATPEP. The region spanning 696-804 is the DMAP1-binding domain; it reads NETLLPDEVK…DDVTTKAQSR (109 aa). Residues 970–1005 form the EF-hand domain; that stretch reads VQQLNISEVFDEIDTDHSGVLSDREIRTLATRIHEL. Ca(2+) contacts are provided by Asp-983, Asp-985, Ser-987, and Glu-994. Residues Asn-1021, Asn-1029, and Asn-1094 are each glycosylated (N-linked (GlcNAc...) asparagine). Residues 1180–1200 traverse the membrane as a helical segment; that stretch reads VLVTLVVFTVMSFFAEQLVML.

The protein belongs to the stealth family. In terms of assembly, hexamer of two alpha, two beta and two gamma (GNPTG) subunits; disulfide-linked. The alpha and/or the beta subunits of the enzyme constitute the catalytic subunits. The alpha- and beta-subunits are generated by a proteolytic cleavage by mbtps1 protease at the Gln-893-Asp-894 bond.

The protein localises to the golgi apparatus membrane. It catalyses the reaction N(4)-[alpha-D-mannosyl-(1-&gt;2)-alpha-D-mannosyl-(glycan)]-L-asparaginyl-[protein] + UDP-N-acetyl-alpha-D-glucosamine = N(4)-[6-(N-acetyl-alpha-D-glucosaminyl-1-phospho)-alpha-D-mannosyl-(1-&gt;2)-alpha-D-mannosyl-(glycan)]-L-asparaginyl-[protein] + UMP + H(+). In terms of biological role, catalyzes the formation of mannose 6-phosphate (M6P) markers on high mannose type oligosaccharides in the Golgi apparatus. M6P residues are required to bind to the M6P receptors (MPR), which mediate the vesicular transport of lysosomal enzymes to the endosomal/prelysosomal compartment. This chain is N-acetylglucosamine-1-phosphotransferase subunits alpha/beta (gnptab), found in Danio rerio (Zebrafish).